The following is a 143-amino-acid chain: Large ribosomal subunit protein uL11 (143 aa).

The protein belongs to the universal ribosomal protein uL11 family. In terms of assembly, part of the ribosomal stalk of the 50S ribosomal subunit. Interacts with L10 and the large rRNA to form the base of the stalk. L10 forms an elongated spine to which L12 dimers bind in a sequential fashion forming a multimeric L10(L12)X complex. One or more lysine residues are methylated.

Forms part of the ribosomal stalk which helps the ribosome interact with GTP-bound translation factors. The chain is Large ribosomal subunit protein uL11 from Thiobacillus denitrificans (strain ATCC 25259 / T1).